Consider the following 504-residue polypeptide: ATP-dependent rRNA helicase RRP3 (504 aa).

Low complexity predominate over residues 34-62 (ASASSAASTKESLPVSETISISTSETPVS). A disordered region spans residues 34 to 99 (ASASSAASTK…SSSSPPSVQS (66 aa)). Basic and acidic residues predominate over residues 68 to 79 (SNKEDLSTKKDQ). Over residues 80-99 (SSASSSSSTSSSSSPPSVQS) the composition is skewed to low complexity. Residues 98–126 (QSFTEFDLVPELLESIQSLKYTQPTPIQA) carry the Q motif motif. The region spanning 129–301 (IPHALQGKDI…RSLNSPVQVE (173 aa)) is the Helicase ATP-binding domain. 142–149 (AETGSGKT) is a binding site for ATP. A DEAD box motif is present at residues 248 to 251 (DEVD). The Helicase C-terminal domain occupies 327 to 471 (RLIQIVNLDS…DLPLDEMQGL (145 aa)).

This sequence belongs to the DEAD box helicase family. DDX47/RRP3 subfamily. In terms of assembly, interacts with the SSU processome.

It is found in the nucleus. It catalyses the reaction ATP + H2O = ADP + phosphate + H(+). ATP-dependent rRNA helicase required for pre-ribosomal RNA processing. Involved in the maturation of the 35S-pre-rRNA and to its cleavage to mature 18S rRNA. The protein is ATP-dependent rRNA helicase RRP3 of Lodderomyces elongisporus (strain ATCC 11503 / CBS 2605 / JCM 1781 / NBRC 1676 / NRRL YB-4239) (Yeast).